The primary structure comprises 556 residues: Glucose-6-phosphate isomerase (556 aa).

The active-site Proton donor is the glutamate 360. Active-site residues include histidine 391 and lysine 519.

The protein belongs to the GPI family.

Its subcellular location is the cytoplasm. It carries out the reaction alpha-D-glucose 6-phosphate = beta-D-fructose 6-phosphate. It participates in carbohydrate biosynthesis; gluconeogenesis. It functions in the pathway carbohydrate degradation; glycolysis; D-glyceraldehyde 3-phosphate and glycerone phosphate from D-glucose: step 2/4. Catalyzes the reversible isomerization of glucose-6-phosphate to fructose-6-phosphate. The polypeptide is Glucose-6-phosphate isomerase (Acinetobacter baumannii (strain ATCC 17978 / DSM 105126 / CIP 53.77 / LMG 1025 / NCDC KC755 / 5377)).